A 308-amino-acid polypeptide reads, in one-letter code: Transaldolase (308 aa).

Lys125 serves as the catalytic Schiff-base intermediate with substrate.

It belongs to the transaldolase family. Type 1 subfamily. In terms of assembly, homodimer.

The protein resides in the cytoplasm. It carries out the reaction D-sedoheptulose 7-phosphate + D-glyceraldehyde 3-phosphate = D-erythrose 4-phosphate + beta-D-fructose 6-phosphate. It participates in carbohydrate degradation; pentose phosphate pathway; D-glyceraldehyde 3-phosphate and beta-D-fructose 6-phosphate from D-ribose 5-phosphate and D-xylulose 5-phosphate (non-oxidative stage): step 2/3. Its function is as follows. Transaldolase is important for the balance of metabolites in the pentose-phosphate pathway. This is Transaldolase from Pseudomonas fluorescens (strain ATCC BAA-477 / NRRL B-23932 / Pf-5).